A 224-amino-acid polypeptide reads, in one-letter code: Beta-casein (224 aa).

A signal peptide spans 1 to 15 (MKVLILACLVALALA). Phosphoserine is present on residues Ser-30, Ser-32, Ser-33, and Ser-34. Residue Ser-50 is modified to Phosphoserine; in variant A1, variant A2, variant A3, variant B, variant E, variant F, variant G and variant H.

This sequence belongs to the beta-casein family. As to expression, mammary gland specific. Secreted in milk.

The protein resides in the secreted. In terms of biological role, important role in determination of the surface properties of the casein micelles. Functionally, casoparan acts as a macrophage activator, increasing the phagocytic activity of macrophages and peroxide release from macrophages. It also acts as a bradykinin-potentiating peptide. Casohypotensin acts as a bradykinin-potentiating peptide. Induces hypotension in rats. Acts as a strong competitive inhibitor of endo-oligopeptidase A. Its function is as follows. Antioxidant peptide has antioxidant activity. The chain is Beta-casein (CSN2) from Bos taurus (Bovine).